Reading from the N-terminus, the 139-residue chain is Small ribosomal subunit protein bS6 (139 aa).

Over residues 114–133 (KKEPREPRAPREPRVEKVDE) the composition is skewed to basic and acidic residues. The tract at residues 114-139 (KKEPREPRAPREPRVEKVDEQTFTEE) is disordered.

Belongs to the bacterial ribosomal protein bS6 family.

Functionally, binds together with bS18 to 16S ribosomal RNA. The polypeptide is Small ribosomal subunit protein bS6 (Campylobacter concisus (strain 13826)).